The sequence spans 312 residues: Ornithine carbamoyltransferase (312 aa).

Carbamoyl phosphate-binding positions include 50-53 (STRT), Gln77, Arg101, and 128-131 (HPCQ). L-ornithine contacts are provided by residues Asn160, Asp224, and 228-229 (SM). Residues 264–265 (CL) and Arg292 each bind carbamoyl phosphate.

Belongs to the aspartate/ornithine carbamoyltransferase superfamily. OTCase family.

It is found in the cytoplasm. It catalyses the reaction carbamoyl phosphate + L-ornithine = L-citrulline + phosphate + H(+). Its pathway is amino-acid biosynthesis; L-arginine biosynthesis; L-arginine from L-ornithine and carbamoyl phosphate: step 1/3. Reversibly catalyzes the transfer of the carbamoyl group from carbamoyl phosphate (CP) to the N(epsilon) atom of ornithine (ORN) to produce L-citrulline. This Leifsonia xyli subsp. xyli (strain CTCB07) protein is Ornithine carbamoyltransferase.